The sequence spans 184 residues: Uroplakin-2 (184 aa).

An N-terminal signal peptide occupies residues 1 to 25; that stretch reads MAPLLPIRTLPLILILLALLSPGAA. The propeptide occupies 26–84; that stretch reads DFNISSLSGLLSPALTESLLVALPPCHLTGGNATLMVRRANDSKVVTSSFVVPPCRGRR. Asparagine 28, asparagine 57, and asparagine 66 each carry an N-linked (GlcNAc...) asparagine glycan. The Lumenal portion of the chain corresponds to 85–155; it reads ELVSVVDSGA…IGLGMARTGG (71 aa). Residues 156-176 form a helical membrane-spanning segment; that stretch reads MVVITVLLSVAMFLLVLGFII. The Cytoplasmic segment spans residues 177–184; that stretch reads ALALGSRK.

Belongs to the uroplakin-2 family. Interacts with uroplakin-1a (UPK1A). Expressed in ureter.

The protein localises to the cell membrane. Its function is as follows. Component of the asymmetric unit membrane (AUM); a highly specialized biomembrane elaborated by terminally differentiated urothelial cells. May play an important role in regulating the assembly of the AUM. This Homo sapiens (Human) protein is Uroplakin-2 (UPK2).